The primary structure comprises 294 residues: Probable 2-(5''-triphosphoribosyl)-3'-dephosphocoenzyme-A synthase (294 aa).

It belongs to the CitG/MdcB family.

The enzyme catalyses 3'-dephospho-CoA + ATP = 2'-(5''-triphospho-alpha-D-ribosyl)-3'-dephospho-CoA + adenine. In Streptococcus equi subsp. zooepidemicus (strain MGCS10565), this protein is Probable 2-(5''-triphosphoribosyl)-3'-dephosphocoenzyme-A synthase.